A 156-amino-acid chain; its full sequence is Small ribosomal subunit protein uS7 (156 aa).

It belongs to the universal ribosomal protein uS7 family. As to quaternary structure, part of the 30S ribosomal subunit. Contacts proteins S9 and S11.

One of the primary rRNA binding proteins, it binds directly to 16S rRNA where it nucleates assembly of the head domain of the 30S subunit. Is located at the subunit interface close to the decoding center, probably blocks exit of the E-site tRNA. This is Small ribosomal subunit protein uS7 from Dechloromonas aromatica (strain RCB).